Here is a 115-residue protein sequence, read N- to C-terminus: Large ribosomal subunit protein bL20 (115 aa).

This sequence belongs to the bacterial ribosomal protein bL20 family.

Functionally, binds directly to 23S ribosomal RNA and is necessary for the in vitro assembly process of the 50S ribosomal subunit. It is not involved in the protein synthesizing functions of that subunit. The protein is Large ribosomal subunit protein bL20 of Chlorobaculum tepidum (strain ATCC 49652 / DSM 12025 / NBRC 103806 / TLS) (Chlorobium tepidum).